A 671-amino-acid polypeptide reads, in one-letter code: K(+)-insensitive pyrophosphate-energized proton pump (671 aa).

The next 5 membrane-spanning stretches (helical) occupy residues 3–23 (SLIF…AFFA), 57–77 (TIAV…DDGL), 79–99 (IAIG…IGMS), 128–148 (AVTG…FYIL), and 156–176 (VGFG…GGIF). Lys178 serves as a coordination point for substrate. 4 residues coordinate Mg(2+): Asp181, Asp185, Asn208, and Asp211. The next 6 helical transmembrane spans lie at 223–243 (LFET…LIIG), 249–269 (ILYP…SVFF), 285–305 (GVGG…NSLM), 310–330 (LFYA…ITEY), 366–386 (LVPT…VGGA), and 391–411 (IGLY…GMIV). Residue Asp421 participates in Mg(2+) binding. The next 4 membrane-spanning stretches (helical) occupy residues 452–472 (AVTK…LFAD), 490–510 (VVLA…AVTM), 558–578 (MAMP…ILGP), and 580–600 (ALAG…LMMD). Ca(2+) contacts are provided by Asp607, Asp633, and Asp637. A substrate-binding site is contributed by Lys640. A helical transmembrane segment spans residues 646 to 666 (ALNALIKVVNMVAILFSSLII).

The protein belongs to the H(+)-translocating pyrophosphatase (TC 3.A.10) family. K(+)-insensitive subfamily. As to quaternary structure, homodimer. The cofactor is Mg(2+).

It localises to the cell membrane. It carries out the reaction diphosphate + H2O + H(+)(in) = 2 phosphate + 2 H(+)(out). Its function is as follows. Proton pump that utilizes the energy of pyrophosphate hydrolysis as the driving force for proton movement across the membrane. Generates a proton motive force. In Methanosarcina acetivorans (strain ATCC 35395 / DSM 2834 / JCM 12185 / C2A), this protein is K(+)-insensitive pyrophosphate-energized proton pump.